The primary structure comprises 430 residues: Transcobalamin-2 (430 aa).

The N-terminal stretch at 1-18 (MELLKALLLLSGVFGALA) is a signal peptide. Intrachain disulfides connect cysteine 21–cysteine 270, cysteine 116–cysteine 312, and cysteine 165–cysteine 208. Residues 152 to 156 (TNYYQ), histidine 193, 193 to 197 (HVSVD), asparagine 245, serine 248, glutamine 294, and 398 to 400 (WQL) each bind cob(II)alamin.

This sequence belongs to the eukaryotic cobalamin transport proteins family. Interacts with CD320 (via LDL-receptor class A domains).

It localises to the secreted. In terms of biological role, primary vitamin B12-binding and transport protein. Delivers cobalamin to cells. This is Transcobalamin-2 (Tcn2) from Mus musculus (Mouse).